A 448-amino-acid chain; its full sequence is Ribosomal protein uS12 methylthiotransferase RimO (448 aa).

In terms of domain architecture, MTTase N-terminal spans 16-126; the sequence is PRISFVSLGC…VVAAVHEAVP (111 aa). [4Fe-4S] cluster is bound by residues C25, C61, C90, C157, C161, and C164. The region spanning 143 to 380 is the Radical SAM core domain; the sequence is LTPRHYAYLK…MEAQAGVSLK (238 aa). One can recognise a TRAM domain in the interval 383 to 448; that stretch reads RAKVGKRLQV…DAYDLHGIAV (66 aa).

The protein belongs to the methylthiotransferase family. RimO subfamily. The cofactor is [4Fe-4S] cluster.

The protein localises to the cytoplasm. It carries out the reaction L-aspartate(89)-[ribosomal protein uS12]-hydrogen + (sulfur carrier)-SH + AH2 + 2 S-adenosyl-L-methionine = 3-methylsulfanyl-L-aspartate(89)-[ribosomal protein uS12]-hydrogen + (sulfur carrier)-H + 5'-deoxyadenosine + L-methionine + A + S-adenosyl-L-homocysteine + 2 H(+). In terms of biological role, catalyzes the methylthiolation of an aspartic acid residue of ribosomal protein uS12. This is Ribosomal protein uS12 methylthiotransferase RimO from Methylorubrum populi (strain ATCC BAA-705 / NCIMB 13946 / BJ001) (Methylobacterium populi).